We begin with the raw amino-acid sequence, 1940 residues long: Protein ORF1940 (1940 aa).

TPR repeat units lie at residues 119 to 153 (IKAC…ALQY), 155 to 186 (FQSL…LQQI), 480 to 513 (RLPD…GLHG), and 617 to 652 (GKSM…SPTS). Disordered regions lie at residues 1160–1239 (PSKV…PGAV) and 1519–1571 (KGPS…TVTS). Residues 1164-1185 (QNTTQPSATQNTTTQPTAQNTS) are compositionally biased toward low complexity. Positions 1186 to 1200 (LPGATQNTTLPTPSK) are enriched in polar residues. Composition is skewed to low complexity over residues 1201 to 1235 (VQNT…NTSL), 1521 to 1539 (PSTT…MTPP), and 1561 to 1571 (TPGSGSQTVTS). The stretch at 1691 to 1724 (KDLNKSVGTSVVEEAKYNSTLQTYLAGLGIKDLN) is one TPR 5 repeat. The disordered stretch occupies residues 1862–1940 (TTTHHITPPP…AEQAEQVLLI (79 aa)). Residues 1868 to 1883 (TPPPPPPPPPPPPPPK) are compositionally biased toward pro residues. Residues 1884 to 1894 (TQTITTTTQIT) show a composition bias toward low complexity. Over residues 1895–1912 (PPSPPPTPPPPPPPPKSP) the composition is skewed to pro residues.

This is Protein ORF1940 from Acidianus convivator (ATV).